The primary structure comprises 887 residues: Lon protease homolog 2, peroxisomal (887 aa).

The Lon N-terminal domain occupies 11 to 256 (LGILAFRNKV…KATELVDRHL (246 aa)). The interval 72–101 (YPGGGTDSGERNVKSQPGLSDSRKADGKSQ) is disordered. 409 to 416 (GPPGVGKT) provides a ligand contact to ATP. A Lon proteolytic domain is found at 693–878 (VSNPGVSVGL…EVLEQAFEGG (186 aa)). Residues Ser-784 and Lys-827 contribute to the active site. The short motif at 885–887 (ARL) is the Microbody targeting signal element.

The protein belongs to the peptidase S16 family.

It is found in the peroxisome matrix. It catalyses the reaction Hydrolysis of proteins in presence of ATP.. ATP-dependent serine protease that mediates the selective degradation of misfolded and unassembled polypeptides in the peroxisomal matrix. Necessary for type 2 peroxisome targeting signal (PTS2)-containing protein processing and facilitates peroxisome matrix protein import. This chain is Lon protease homolog 2, peroxisomal, found in Spinacia oleracea (Spinach).